We begin with the raw amino-acid sequence, 352 residues long: MCYRQETMSGLLDGIPEAVALRCLAHVPLHLHPNLELVSRSWRAAIRSHELFRVRKELRSSEHLLCVCAFDPENIWQVYSPNCDRWLTLPLLPSRIRHLAHFGAVTTAGMLFVLGGGSDAVSPVTGDHDGTFATDQVWSYDFVQRQWTPRASMLVPRAMFACCVLQGKIVVAGGFTTCRKSISGAEMYDPENDVWTSIPDLHQTHNSACSGLVVNGKVHVLHKGLSTVQVLESVKLGWDVKDYGWPQGPMVVVEDVLYVMSHGLVFKQEGDTWKMVASASEFKRRIGMAMTSLSDEVLIVGGVIGPDRLNWDIKPLSDVDALTVGNDRPAWRSVAPMTRCRGTILGCTQLTI.

The F-box domain maps to 9–55 (SGLLDGIPEAVALRCLAHVPLHLHPNLELVSRSWRAAIRSHELFRVR). Kelch repeat units lie at residues 57–109 (ELRS…TTAG), 110–167 (MLFV…VLQG), 168–215 (KIVV…LVVN), 243–293 (YGWP…MTSL), and 296–351 (EVLI…TQLT).

In terms of assembly, part of a SCF (ASK-cullin-F-box) protein ligase complex. Interacts with SKP1A/ASK1.

It participates in protein modification; protein ubiquitination. In terms of biological role, component of SCF(ASK-cullin-F-box) E3 ubiquitin ligase complexes, which may mediate the ubiquitination and subsequent proteasomal degradation of target proteins. The chain is F-box/kelch-repeat protein SKIP30 (SKIP30) from Arabidopsis thaliana (Mouse-ear cress).